Consider the following 1321-residue polypeptide: Bile salt export pump (1321 aa).

At 1 to 62 (MSDSVILRSV…FSSSKDNWLM (62 aa)) the chain is on the cytoplasmic side. Residues 62–385 (MFMGSVCALL…ASSCLEIFST (324 aa)) enclose the ABC transmembrane type-1 1 domain. The helical transmembrane segment at 63–83 (FMGSVCALLHGMAQPGMIIVF) threads the bilayer. Topologically, residues 84–147 (GILTDIFVEY…VIKFSGIYAG (64 aa)) are extracellular. Residues Asn109, Asn116, Asn122, and Asn125 are each glycosylated (N-linked (GlcNAc...) asparagine). A helical membrane pass occupies residues 148-168 (VGVAVLILGYFQIRLWVITGA). Topologically, residues 169–215 (RQIRKMRKFYFRRIMRMEIGWFDCTSVGELNSRFSDDINKIDEAIAD) are cytoplasmic. The chain crosses the membrane as a helical span at residues 216–236 (QMALFLQRLSTALSGLLLGFY). Residues 237–240 (RGWK) are Extracellular-facing. Residues 241–261 (LTLVILAVSPLIGIGAAVIGL) traverse the membrane as a helical segment. The Cytoplasmic portion of the chain corresponds to 262–319 (SVAKFTELELKAYAKAGSIADEVLSSIRTVAAFGGENKEVERYEKNLMFAQRWGIWKG). Residues 320-340 (MVMGFFTGYMWCLIFFCYALA) form a helical membrane-spanning segment. At 341–353 (FWYGSRLVLDEGE) the chain is on the extracellular side. The chain crosses the membrane as a helical span at residues 354–374 (YTPGTLIQIFLCVIIAAMNIG). The Cytoplasmic portion of the chain corresponds to 375–755 (NASSCLEIFS…KYNISEWPYI (381 aa)). An ABC transporter 1 domain is found at 420-656 (IEFHNVTFHY…KGVYFMLVTL (237 aa)). Residue 455 to 462 (GSSGAGKS) coordinates ATP. The residue at position 586 (Thr586) is a Phosphothreonine. Ser587 is subject to Phosphoserine. An interaction with HAX1 region spans residues 651–674 (FMLVTLQSQEDNTHKETGIKGKDT). Residues 662-684 (NTHKETGIKGKDTTEGDTPERTF) are compositionally biased toward basic and acidic residues. A disordered region spans residues 662–722 (NTHKETGIKG…PLAIGDHKSS (61 aa)). A phosphoserine mark is found at Ser692, Ser703, and Ser706. The ABC transmembrane type-1 2 domain occupies 755 to 1043 (ILVGALCAAI…TFSYTPSYAK (289 aa)). A helical transmembrane segment spans residues 756 to 776 (LVGALCAAINGAVTPIYSLLF). Topologically, residues 777 to 794 (SQILKTFSLVDKEQQRSE) are extracellular. A helical membrane pass occupies residues 795–815 (IYSMCLFFVILGCVSLFTQFL). At 816 to 869 (QGYNFAKSGELLTKRLRKFGFKAMLRQDIGWFDDLKNNPGVLTTRLATDASQVQ) the chain is on the cytoplasmic side. A run of 2 helical transmembrane segments spans residues 870–890 (GATG…FVAV) and 891–911 (LIAF…FPFL). Topologically, residues 912-979 (ALSGAVQTKM…SYKTAIRKAN (68 aa)) are cytoplasmic. The helical transmembrane segment at 980–1000 (VYGLCYAFSQGISFLANSAAY) threads the bilayer. Residues 1001–1011 (RYGGYLIVYED) are Extracellular-facing. The chain crosses the membrane as a helical span at residues 1012 to 1032 (LNFSYVFRVVSSIAMSATAVG). Topologically, residues 1033–1321 (RTFSYTPSYA…KLVITGAPIS (289 aa)) are cytoplasmic. In terms of domain architecture, ABC transporter 2 spans 1078–1316 (IDFIDCKFTY…KGAYYKLVIT (239 aa)). Position 1113–1120 (1113–1120 (GSSGCGKS)) interacts with ATP. Ser1321 is modified (phosphoserine).

This sequence belongs to the ABC transporter superfamily. ABCB family. Multidrug resistance exporter (TC 3.A.1.201) subfamily. As to quaternary structure, interacts with HAX1. Interacts with the adapter protein complex 2 (AP-2) throught AP2A2 or AP2A1; this interaction regulates cell membrane expression of ABCB11 through its internalization in a clathrin-dependent manner and its subsequent degradation. N-glycosylated. In terms of processing, ubiquitinated; short-chain ubiquitination regulates cell-Surface expression of ABCB11. As to expression, expressed predominantly, if not exclusively in the liver, where it was further localized to the canalicular microvilli and to subcanalicular vesicles of the hepatocytes by in situ.

It is found in the apical cell membrane. The protein resides in the recycling endosome membrane. The protein localises to the endosome. Its subcellular location is the cell membrane. It carries out the reaction cholate(in) + ATP + H2O = cholate(out) + ADP + phosphate + H(+). The enzyme catalyses taurocholate(in) + ATP + H2O = taurocholate(out) + ADP + phosphate + H(+). The catalysed reaction is glycocholate(in) + ATP + H2O = glycocholate(out) + ADP + phosphate + H(+). It catalyses the reaction glycochenodeoxycholate(in) + ATP + H2O = glycochenodeoxycholate(out) + ADP + phosphate + H(+). It carries out the reaction taurochenodeoxycholate(in) + ATP + H2O = taurochenodeoxycholate(out) + ADP + phosphate + H(+). The enzyme catalyses glycoursodeoxycholate(in) + ATP + H2O = glycoursodeoxycholate(out) + ADP + phosphate + H(+). The catalysed reaction is tauroursodeoxycholate(in) + ATP + H2O = tauroursodeoxycholate(out) + ADP + phosphate + H(+). It catalyses the reaction taurodeoxycholate(in) + ATP + H2O = taurodeoxycholate(out) + ADP + phosphate + H(+). It carries out the reaction taurolithocholate 3-sulfate(in) + ATP + H2O = taurolithocholate 3-sulfate(out) + ADP + phosphate + H(+). The enzyme catalyses pravastatin(in) + ATP + H2O = pravastatin(out) + ADP + phosphate + H(+). The uptake of taurocholate is inhibited by taurolithocholate sulfate with an IC(50) of 9 uM. Pravastatin competitively inhibits the transport of taurocholic acid. Cyclosporin A, glibenclamide, rifampicin and troglitazonestrongly competitively inhibit the transport activity of taurocholate. The canalicular transport activity of taurocholate is strongly dependent on canalicular membrane cholesterol content. The uptake of taurocholate is increased by short- and medium-chain fatty acids. Cholesterol increases transport capacity of taurocholate without affecting the affinity for the substrate. Its function is as follows. Catalyzes the transport of the major hydrophobic bile salts, such as taurine and glycine-conjugated cholic acid across the canalicular membrane of hepatocytes in an ATP-dependent manner, therefore participates in hepatic bile acid homeostasis and consequently to lipid homeostasis through regulation of biliary lipid secretion in a bile salts dependent manner. Transports taurine-conjugated bile salts more rapidly than glycine-conjugated bile salts. Also transports non-bile acid compounds, such as pravastatin and fexofenadine in an ATP-dependent manner and may be involved in their biliary excretion. The polypeptide is Bile salt export pump (Mus musculus (Mouse)).